We begin with the raw amino-acid sequence, 396 residues long: Trypacidin cluster transcription factor (396 aa).

Residues 20 to 47 (CRACGLSKVRCSKEKPTCSRCRRRGTVC) constitute a DNA-binding region (zn(2)-C6 fungal-type). Disordered stretches follow at residues 54 to 120 (RPGR…LSTV), 190 to 218 (DPAP…ESEA), and 346 to 365 (MHGA…PAPL). Positions 57-71 (RKPDSRSEVEPEPGH) are enriched in basic and acidic residues. A compositionally biased stretch (low complexity) spans 72–82 (LSHPLPSPESS).

As to expression, specifically expressed in conidia.

The protein resides in the nucleus. Functionally, transcription factor that regulates the expression of the gene clusters that mediate the biosynthesis of trypacidin, a metabolite with antiprotozoal activity and a possible role in the infection process. Trypacidin is toxic for human pulmonary and bronchial epithelial cells by initiating the intracellular formation of nitric oxide (NO) and hydrogen peroxide (H(2)O(2)), thus triggering host necrotic cell death. The chain is Trypacidin cluster transcription factor from Aspergillus fumigatus (strain ATCC MYA-4609 / CBS 101355 / FGSC A1100 / Af293) (Neosartorya fumigata).